The chain runs to 823 residues: Leucine--tRNA ligase (823 aa).

Positions 55–65 (PYPSGNLHIGH) match the 'HIGH' region motif. The 'KMSKS' region motif lies at 590–594 (KMSKS). Lys-593 serves as a coordination point for ATP.

This sequence belongs to the class-I aminoacyl-tRNA synthetase family.

It is found in the cytoplasm. The catalysed reaction is tRNA(Leu) + L-leucine + ATP = L-leucyl-tRNA(Leu) + AMP + diphosphate. This is Leucine--tRNA ligase from Deinococcus radiodurans (strain ATCC 13939 / DSM 20539 / JCM 16871 / CCUG 27074 / LMG 4051 / NBRC 15346 / NCIMB 9279 / VKM B-1422 / R1).